We begin with the raw amino-acid sequence, 325 residues long: Glutarate 2-hydroxylase (325 aa).

Histidine 160, aspartate 162, and histidine 292 together coordinate Fe cation.

This sequence belongs to the glutarate hydroxylase family. Homotetramer. The cofactor is Fe(2+).

The enzyme catalyses glutarate + 2-oxoglutarate + O2 = (S)-2-hydroxyglutarate + succinate + CO2. Its pathway is amino-acid degradation. Acts as an alpha-ketoglutarate-dependent dioxygenase catalyzing hydroxylation of glutarate (GA) to L-2-hydroxyglutarate (L2HG). Functions in a L-lysine degradation pathway that proceeds via cadaverine, glutarate and L-2-hydroxyglutarate. This chain is Glutarate 2-hydroxylase, found in Salmonella typhimurium (strain SL1344).